A 432-amino-acid polypeptide reads, in one-letter code: Delta-aminolevulinic acid dehydratase, chloroplastic (432 aa).

The disordered stretch occupies residues 84-113 (AAPPVPAKPSAPEGTPAISPLVMPARPRRN). K300 functions as the Schiff-base intermediate with substrate in the catalytic mechanism. The 5-aminolevulinate site is built by R310 and K322. A Mg(2+)-binding site is contributed by E338. K353 acts as the Schiff-base intermediate with substrate in catalysis. The 5-aminolevulinate site is built by S379 and Y418.

This sequence belongs to the ALAD family. As to quaternary structure, homooctamer. Mg(2+) is required as a cofactor.

It localises to the plastid. Its subcellular location is the chloroplast. The enzyme catalyses 2 5-aminolevulinate = porphobilinogen + 2 H2O + H(+). It participates in porphyrin-containing compound metabolism; protoporphyrin-IX biosynthesis; coproporphyrinogen-III from 5-aminolevulinate: step 1/4. Functionally, catalyzes an early step in the biosynthesis of tetrapyrroles. Binds two molecules of 5-aminolevulinate per subunit, each at a distinct site, and catalyzes their condensation to form porphobilinogen. The sequence is that of Delta-aminolevulinic acid dehydratase, chloroplastic (HEMB) from Physcomitrium patens (Spreading-leaved earth moss).